A 640-amino-acid polypeptide reads, in one-letter code: tRNA uridine 5-carboxymethylaminomethyl modification enzyme MnmG (640 aa).

An FAD-binding site is contributed by 9–14 (GGGHAG). An NAD(+)-binding site is contributed by 289–303 (GPRYCPSIEDKINKF).

It belongs to the MnmG family. Homodimer. Heterotetramer of two MnmE and two MnmG subunits. FAD is required as a cofactor.

The protein resides in the cytoplasm. Its function is as follows. NAD-binding protein involved in the addition of a carboxymethylaminomethyl (cmnm) group at the wobble position (U34) of certain tRNAs, forming tRNA-cmnm(5)s(2)U34. This is tRNA uridine 5-carboxymethylaminomethyl modification enzyme MnmG from Campylobacter hominis (strain ATCC BAA-381 / DSM 21671 / CCUG 45161 / LMG 19568 / NCTC 13146 / CH001A).